A 313-amino-acid chain; its full sequence is Probable cell division protein WhiA (313 aa).

A DNA-binding region (H-T-H motif) is located at residues 280 to 313 (SLKELGAMLNPPIGKSGVNHRLKKLCSIADGLRQ).

The protein belongs to the WhiA family.

Its function is as follows. Involved in cell division and chromosome segregation. This is Probable cell division protein WhiA from Lachnoclostridium phytofermentans (strain ATCC 700394 / DSM 18823 / ISDg) (Clostridium phytofermentans).